The following is a 482-amino-acid chain: 2-succinylbenzoate--CoA ligase (482 aa).

It belongs to the ATP-dependent AMP-binding enzyme family. MenE subfamily.

The catalysed reaction is 2-succinylbenzoate + ATP + CoA = 2-succinylbenzoyl-CoA + AMP + diphosphate. The protein operates within quinol/quinone metabolism; 1,4-dihydroxy-2-naphthoate biosynthesis; 1,4-dihydroxy-2-naphthoate from chorismate: step 5/7. It functions in the pathway quinol/quinone metabolism; menaquinone biosynthesis. Its function is as follows. Converts 2-succinylbenzoate (OSB) to 2-succinylbenzoyl-CoA (OSB-CoA). The sequence is that of 2-succinylbenzoate--CoA ligase from Bacillus anthracis (strain A0248).